We begin with the raw amino-acid sequence, 1072 residues long: Zn(2)-C6 fungal-type transcription factor FTF1a (1072 aa).

Positions 178–205 (CMACRRKKIRCSGEKPACKHCLRSRILC) form a DNA-binding region, zn(2)-C6 fungal-type.

The protein resides in the nucleus. Functionally, zn(2)-C6 fungal-type transcription factor that has a role in the establishment of the fungus within the plant and/or the progress of the disease. Regulates the expression of virulence factors such as SIX1 and SIX6. The protein is Zn(2)-C6 fungal-type transcription factor FTF1a of Fusarium oxysporum f. sp. lycopersici (strain 4287 / CBS 123668 / FGSC 9935 / NRRL 34936) (Fusarium vascular wilt of tomato).